The primary structure comprises 1453 residues: Collagen alpha-1(I) chain (1453 aa).

The signal sequence occupies residues 1 to 22; that stretch reads MFSFVDSRLLLLIAATVLLTRG. The propeptide at 23-151 is N-terminal propeptide; that stretch reads EGEEDIQTGS…PPGLGGNFAP (129 aa). Residues 31–89 form the VWFC domain; it reads GSCVQDGLTYNDKDVWKPEPCQICVCDSGNILCDEVICEDTSDCPNAEIPFGECCPICP. The segment at 98 to 1203 is disordered; that stretch reads PESAGVEGPK…PQEKAHDGGR (1106 aa). A compositionally biased stretch (basic and acidic residues) spans 106–116; it reads PKGDTGPRGDR. Residues 131 to 143 are compositionally biased toward pro residues; it reads PGLPGPPGPPGPP. Glutamine 152 is subject to Pyrrolidone carboxylic acid. Residue lysine 160 is modified to Allysine. Over residues 162 to 176 the composition is skewed to low complexity; that stretch reads AGVAVPGPMGPAGPR. 4-hydroxyproline occurs at positions 179, 182, 185, 194, 197, 200, 215, 230, 236, 245, and 251. The span at 187–206 shows a compositional bias: low complexity; the sequence is PQGFQGPPGEPGEPGASGPM. The residue at position 254 (lysine 254) is a 5-hydroxylysine; alternate. Lysine 254 carries an O-linked (Gal...) hydroxylysine; partial glycan. Over residues 265-284 the composition is skewed to low complexity; it reads AKGQPGPAGPKGEPGSPGEN. 4-hydroxyproline is present on residues proline 269, proline 278, proline 281, proline 287, proline 296, proline 302, proline 317, proline 323, proline 332, and proline 335. Residues 307–319 are compositionally biased toward low complexity; sequence PAGARGNDGAPGA. Positions 320–334 are enriched in pro residues; the sequence is AGPPGPTGPAGPPGF. Residues 350–361 are compositionally biased toward low complexity; that stretch reads RGSEGPQGSRGE. 4-hydroxyproline occurs at positions 362, 365, 377, 383, 392, 398, 401, and 416. The span at 368-418 shows a compositional bias: low complexity; that stretch reads AGAAGPAGNPGADGQPGAKGATGAPGIAGAPGFPGARGPSGPQGPSGAPGP. Residue lysine 419 is modified to 5-hydroxylysine. Proline 425, proline 428, proline 440, proline 449, proline 464, proline 470, proline 479, and proline 485 each carry 4-hydroxyproline. Residues 463 to 482 are compositionally biased toward low complexity; it reads EPGPAGLPGPAGERGAPGSR. Residue lysine 494 is modified to 5-hydroxylysine. Proline 497, proline 503, proline 512, proline 518, proline 524, proline 533, proline 536, proline 545, proline 554, proline 560, proline 572, proline 581, proline 584, proline 590, proline 593, proline 611, proline 629, proline 635, proline 641, proline 647, proline 653, proline 659, proline 671, proline 680, proline 692, proline 704, proline 707, proline 713, proline 719, proline 728, and proline 737 each carry 4-hydroxyproline. Residues 527–581 are compositionally biased toward low complexity; that stretch reads KGLTGSPGSPGPDGKTGPPGPAGQDGRPGPAGPPGARGQAGVMGFPGPKGAAGEP. Over residues 623–664 the composition is skewed to low complexity; it reads QGPAGAPGFQGLPGPAGPPGEAGKPGEQGVPGNAGAPGPAGA. A compositionally biased stretch (low complexity) spans 685–722; sequence PRGANGAPGNDGAKGDAGAPGAPGNEGPPGLEGMPGER. 5-hydroxylysine is present on lysine 740. 4-hydroxyproline occurs at positions 746, 761, 767, 776, 788, 794, 797, 806, 812, 830, 839, and 848. A compositionally biased stretch (low complexity) spans 800-827; it reads AGFAGPPGADGQPGAKGETGDAGAKGDA. Residues 835-883 show a composition bias toward low complexity; it reads PTGAPGPAGZVGAPGPKGARGSAGPPGATGFPGAAGRVGPPGPSGNIGL. A 5-hydroxylysine modification is found at lysine 851. A 4-hydroxyproline mark is found at proline 860 and proline 866. Residue proline 874 is modified to 3-hydroxyproline. 18 positions are modified to 4-hydroxyproline: proline 875, proline 884, proline 887, proline 908, proline 911, proline 917, proline 920, proline 926, proline 935, proline 953, proline 962, proline 965, proline 971, proline 986, proline 992, proline 998, proline 1007, and proline 1013. Over residues 890-908 the composition is skewed to low complexity; sequence AGKZGSKGPRGETGPAGRP. Positions 910 to 920 are enriched in pro residues; that stretch reads EPGPAGPPGPP. Pro residues predominate over residues 985–995; sequence PPGPMGPPGLA. The segment covering 997–1021 has biased composition (low complexity); the sequence is PPGEAGREGAPGAEGAPGRDGAAGP. Position 1022 is a 5-hydroxylysine; partial (lysine 1022). Residues 1031–1046 are compositionally biased toward pro residues; sequence AGPPGAPGAPGAPGPV. Residues proline 1034, proline 1037, proline 1040, and proline 1067 each carry the 4-hydroxyproline modification. Positions 1070 to 1081 are enriched in low complexity; it reads AGARGPAGPQGP. The span at 1082–1096 shows a compositional bias: basic and acidic residues; it reads RGDKGETGEQGDRGM. At lysine 1085 the chain carries 5-hydroxylysine; partial. Lysine 1097 bears the 5-hydroxylysine; alternate mark. Lysine 1097 carries an O-linked (Gal...) hydroxylysine; partial glycan. Proline 1109, proline 1112, proline 1115, proline 1133, and proline 1148 each carry 4-hydroxyproline. Over residues 1115–1139 the composition is skewed to low complexity; it reads PGEQGPSGASGPAGPRGPPGSAGAA. The residue at position 1153 (proline 1153) is a 3-hydroxyproline. At proline 1154 the chain carries 4-hydroxyproline. Residues 1166–1181 show a composition bias toward pro residues; it reads VGPPGPPGPPGPPGPP. 3-hydroxyproline is present on proline 1168. A 4-hydroxyproline modification is found at proline 1169. A 3-hydroxyproline modification is found at proline 1171. At proline 1172 the chain carries 4-hydroxyproline. 3-hydroxyproline is present on proline 1174. Residues proline 1175, proline 1178, and proline 1181 each carry the 4-hydroxyproline modification. Allysine is present on lysine 1197. Positions 1208-1453 are cleaved as a propeptide — C-terminal propeptide; that stretch reads DDANVMRDRD…GIDIGPVCFL (246 aa). One can recognise a Fibrillar collagen NC1 domain in the interval 1218–1453; it reads LEVDTTLKSL…GIDIGPVCFL (236 aa). Intrachain disulfides connect cysteine 1248–cysteine 1280, cysteine 1288–cysteine 1451, and cysteine 1359–cysteine 1404. Ca(2+) is bound by residues aspartate 1266, asparagine 1268, glutamine 1269, cysteine 1271, and aspartate 1274. Asparagine 1354 carries an N-linked (GlcNAc...) asparagine glycan.

It belongs to the fibrillar collagen family. Trimers of one alpha 2(I) and two alpha 1(I) chains. In terms of processing, contains mostly 4-hydroxyproline. Proline residues at the third position of the tripeptide repeating unit (G-X-Y) are 4-hydroxylated in some or all of the chains. Post-translationally, contains 3-hydroxyproline. This modification occurs on the first proline residue in the sequence motif Gly-Pro-Hyp, where Hyp is 4-hydroxyproline. Lysine residues at the third position of the tripeptide repeating unit (G-X-Y) are 5-hydroxylated in some or all of the chains. In terms of processing, O-glycosylated on hydroxylated lysine residues. The O-linked glycan consists of a Glc-Gal disaccharide. As to expression, forms the fibrils of tendon, ligaments and bones. In bones the fibrils are mineralized with calcium hydroxyapatite.

The protein localises to the secreted. It is found in the extracellular space. Its subcellular location is the extracellular matrix. Type I collagen is a member of group I collagen (fibrillar forming collagen). This is Collagen alpha-1(I) chain (COL1A1) from Gallus gallus (Chicken).